The sequence spans 366 residues: RNA 3'-terminal phosphate cyclase (366 aa).

Residues glutamine 104, proline 131, tyrosine 294, aspartate 297, glutamine 298, and histidine 320 each contribute to the ATP site. Histidine 320 functions as the Tele-AMP-histidine intermediate in the catalytic mechanism.

The protein belongs to the RNA 3'-terminal cyclase family. Type 1 subfamily.

It localises to the nucleus. It is found in the nucleoplasm. It catalyses the reaction a 3'-end 3'-phospho-ribonucleotide-RNA + ATP = a 3'-end 2',3'-cyclophospho-ribonucleotide-RNA + AMP + diphosphate. Its function is as follows. Catalyzes the conversion of 3'-phosphate to a 2',3'-cyclic phosphodiester at the end of RNA. The mechanism of action of the enzyme occurs in 3 steps: (A) adenylation of the enzyme by ATP; (B) transfer of adenylate to an RNA-N3'P to produce RNA-N3'PP5'A; (C) and attack of the adjacent 2'-hydroxyl on the 3'-phosphorus in the diester linkage to produce the cyclic end product. Likely functions in some aspects of cellular RNA processing. Function plays an important role in regulating axon regeneration by inhibiting central nervous system (CNS) axon regeneration following optic nerve injury. This chain is RNA 3'-terminal phosphate cyclase (RTCA), found in Macaca fascicularis (Crab-eating macaque).